We begin with the raw amino-acid sequence, 863 residues long: Leucine--tRNA ligase (863 aa).

The short motif at 42–52 is the 'HIGH' region element; sequence PYPSGKIHMGH. The 'KMSKS' region motif lies at 618–622; it reads KMSKS. Lysine 621 is a binding site for ATP.

Belongs to the class-I aminoacyl-tRNA synthetase family.

Its subcellular location is the cytoplasm. The catalysed reaction is tRNA(Leu) + L-leucine + ATP = L-leucyl-tRNA(Leu) + AMP + diphosphate. This chain is Leucine--tRNA ligase, found in Desulforapulum autotrophicum (strain ATCC 43914 / DSM 3382 / VKM B-1955 / HRM2) (Desulfobacterium autotrophicum).